The sequence spans 162 residues: 2-amino-4-hydroxy-6-hydroxymethyldihydropteridine pyrophosphokinase (162 aa).

It belongs to the HPPK family.

It carries out the reaction 6-hydroxymethyl-7,8-dihydropterin + ATP = (7,8-dihydropterin-6-yl)methyl diphosphate + AMP + H(+). It participates in cofactor biosynthesis; tetrahydrofolate biosynthesis; 2-amino-4-hydroxy-6-hydroxymethyl-7,8-dihydropteridine diphosphate from 7,8-dihydroneopterin triphosphate: step 4/4. In terms of biological role, catalyzes the transfer of pyrophosphate from adenosine triphosphate (ATP) to 6-hydroxymethyl-7,8-dihydropterin, an enzymatic step in folate biosynthesis pathway. The chain is 2-amino-4-hydroxy-6-hydroxymethyldihydropteridine pyrophosphokinase (folK) from Pseudomonas aeruginosa (strain ATCC 15692 / DSM 22644 / CIP 104116 / JCM 14847 / LMG 12228 / 1C / PRS 101 / PAO1).